The sequence spans 216 residues: NKG2-D type II integral membrane protein (216 aa).

Over 1-51 (MGWIRGRRSRHSWEMSEFHNYNLDLKKSDFSTRWQKQRCPVVKSKCRENAS) the chain is Cytoplasmic. Residues 52-72 (PFFFCCFIAVAMGIRFIIMVT) form a helical; Signal-anchor for type II membrane protein membrane-spanning segment. At 73 to 216 (IWSAVFLNSL…NTYICMQRTV (144 aa)) the chain is on the extracellular side. Disulfide bonds link C96–C105 and C99–C110. Residues 98–213 (PCPKNWICYK…STPNTYICMQ (116 aa)) enclose the C-type lectin domain. N115, N131, N163, and N202 each carry an N-linked (GlcNAc...) asparagine glycan. 2 disulfides stabilise this stretch: C127-C211 and C189-C203.

In terms of assembly, homodimer; disulfide-linked. Heterohexamer composed of two subunits of KLRK1 and four subunits of HCST/DAP10. Interacts (via transmembrane domain) with HCST/DAP10 (via transmembrane domain); the interaction is required for KLRK1 NK cell surface and induces NK cell-mediated cytotoxicity. Can form disulfide-bonded heterodimer with CD94. Interacts with CEACAM1; recruits PTPN6 that dephosphorylates VAV1. In terms of tissue distribution, natural killer cells.

The protein resides in the cell membrane. Functionally, functions as an activating and costimulatory receptor involved in immunosurveillance upon binding to various cellular stress-inducible ligands displayed at the surface of autologous tumor cells and virus-infected cells. Provides both stimulatory and costimulatory innate immune responses on activated killer (NK) cells, leading to cytotoxic activity. Acts as a costimulatory receptor for T-cell receptor (TCR) in CD8(+) T-cell-mediated adaptive immune responses by amplifying T-cell activation. Stimulates perforin-mediated elimination of ligand-expressing tumor cells. Signaling involves calcium influx, culminating in the expression of TNF-alpha. Participates in NK cell-mediated bone marrow graft rejection. May play a regulatory role in differentiation and survival of NK cells. Binds to ligands belonging to various subfamilies of MHC class I-related glycoproteins. This chain is NKG2-D type II integral membrane protein (KLRK1), found in Pan troglodytes (Chimpanzee).